A 505-amino-acid polypeptide reads, in one-letter code: Alpha-internexin (505 aa).

Residues 1-87 are head; it reads MSFGSEHYLC…SQAAARTNEY (87 aa). Phosphoserine is present on Ser72. Residues 88–129 form a coil 1A region; it reads KIIRTNEKEQLQGLNDRFAVFIEKVHQLETQNRALEAELAAL. The 314-residue stretch at 94-407 folds into the IF rod domain; it reads EKEQLQGLND…KLLEGEETRF (314 aa). Residues 130–142 are linker 1; that stretch reads RQRHAEPSRVGEL. Residues 143-238 form a coil 1B region; that stretch reads FQRELRELRA…QVHDEEVAEL (96 aa). Ser219 is modified (phosphoserine). Residues 239-262 form a linker 2 region; it reads LATLQASSQAAAEVDVAVAKPDLT. The tract at residues 263 to 408 is coil 2; it reads SALREIRAQY…LLEGEETRFS (146 aa). Lys290 is subject to N6-acetyllysine. 3 positions are modified to phosphoserine: Ser335, Ser474, and Ser502. Residues 409-505 are tail; sequence TSGLSISGLN…EITTSSSQKM (97 aa). Residues 438-505 form a disordered region; sequence KVSSAGLSLK…EITTSSSQKM (68 aa). Over residues 495–505 the composition is skewed to low complexity; it reads EEITTSSSQKM.

Belongs to the intermediate filament family. In terms of assembly, forms homodimers (in vitro). Forms heterodimers with NEFL, NEFM or NEFH (in vitro). O-glycosylated. In terms of tissue distribution, expressed in the dorsal root ganglion neurons (at protein level).

Functionally, class-IV neuronal intermediate filament that is able to self-assemble. It is involved in the morphogenesis of neurons. It may form an independent structural network without the involvement of other neurofilaments or it may cooperate with NEFL to form the filamentous backbone to which NEFM and NEFH attach to form the cross-bridges. May also cooperate with the neuronal intermediate filament protein PRPH to form filamentous networks. In Rattus norvegicus (Rat), this protein is Alpha-internexin (Ina).